Here is a 156-residue protein sequence, read N- to C-terminus: Transcription antitermination protein NusB (156 aa).

Belongs to the NusB family.

In terms of biological role, involved in transcription antitermination. Required for transcription of ribosomal RNA (rRNA) genes. Binds specifically to the boxA antiterminator sequence of the ribosomal RNA (rrn) operons. In Rickettsia bellii (strain OSU 85-389), this protein is Transcription antitermination protein NusB.